Here is a 333-residue protein sequence, read N- to C-terminus: DNA-directed RNA polymerase subunit alpha (333 aa).

Residues 1–233 (MVQEKLRFST…DLFIPFLHAE (233 aa)) form an alpha N-terminal domain (alpha-NTD) region. Residues 266-333 (KKEIALKSIF…DILKIQKYFT (68 aa)) form an alpha C-terminal domain (alpha-CTD) region.

It belongs to the RNA polymerase alpha chain family. In terms of assembly, in plastids the minimal PEP RNA polymerase catalytic core is composed of four subunits: alpha, beta, beta', and beta''. When a (nuclear-encoded) sigma factor is associated with the core the holoenzyme is formed, which can initiate transcription.

The protein resides in the plastid. The protein localises to the chloroplast. It catalyses the reaction RNA(n) + a ribonucleoside 5'-triphosphate = RNA(n+1) + diphosphate. DNA-dependent RNA polymerase catalyzes the transcription of DNA into RNA using the four ribonucleoside triphosphates as substrates. The sequence is that of DNA-directed RNA polymerase subunit alpha from Phaseolus angularis (Azuki bean).